A 229-amino-acid polypeptide reads, in one-letter code: Protein-L-isoaspartate O-methyltransferase (229 aa).

Residue S74 is part of the active site.

The protein belongs to the methyltransferase superfamily. L-isoaspartyl/D-aspartyl protein methyltransferase family.

The protein resides in the cytoplasm. The catalysed reaction is [protein]-L-isoaspartate + S-adenosyl-L-methionine = [protein]-L-isoaspartate alpha-methyl ester + S-adenosyl-L-homocysteine. Its function is as follows. Catalyzes the methyl esterification of L-isoaspartyl residues in peptides and proteins that result from spontaneous decomposition of normal L-aspartyl and L-asparaginyl residues. It plays a role in the repair and/or degradation of damaged proteins. This is Protein-L-isoaspartate O-methyltransferase from Pelotomaculum thermopropionicum (strain DSM 13744 / JCM 10971 / SI).